Here is a 211-residue protein sequence, read N- to C-terminus: Thiamine-phosphate synthase (211 aa).

Residues 36-40 and Asn-68 each bind 4-amino-2-methyl-5-(diphosphooxymethyl)pyrimidine; that span reads QLRDK. Asp-69 and Asp-88 together coordinate Mg(2+). A 4-amino-2-methyl-5-(diphosphooxymethyl)pyrimidine-binding site is contributed by Ser-107. 133 to 135 is a 2-[(2R,5Z)-2-carboxy-4-methylthiazol-5(2H)-ylidene]ethyl phosphate binding site; the sequence is TKS. Lys-136 serves as a coordination point for 4-amino-2-methyl-5-(diphosphooxymethyl)pyrimidine. Residues Gly-164 and 184-185 contribute to the 2-[(2R,5Z)-2-carboxy-4-methylthiazol-5(2H)-ylidene]ethyl phosphate site; that span reads IS.

This sequence belongs to the thiamine-phosphate synthase family. The cofactor is Mg(2+).

The enzyme catalyses 2-[(2R,5Z)-2-carboxy-4-methylthiazol-5(2H)-ylidene]ethyl phosphate + 4-amino-2-methyl-5-(diphosphooxymethyl)pyrimidine + 2 H(+) = thiamine phosphate + CO2 + diphosphate. The catalysed reaction is 2-(2-carboxy-4-methylthiazol-5-yl)ethyl phosphate + 4-amino-2-methyl-5-(diphosphooxymethyl)pyrimidine + 2 H(+) = thiamine phosphate + CO2 + diphosphate. It catalyses the reaction 4-methyl-5-(2-phosphooxyethyl)-thiazole + 4-amino-2-methyl-5-(diphosphooxymethyl)pyrimidine + H(+) = thiamine phosphate + diphosphate. The protein operates within cofactor biosynthesis; thiamine diphosphate biosynthesis; thiamine phosphate from 4-amino-2-methyl-5-diphosphomethylpyrimidine and 4-methyl-5-(2-phosphoethyl)-thiazole: step 1/1. Condenses 4-methyl-5-(beta-hydroxyethyl)thiazole monophosphate (THZ-P) and 2-methyl-4-amino-5-hydroxymethyl pyrimidine pyrophosphate (HMP-PP) to form thiamine monophosphate (TMP). The polypeptide is Thiamine-phosphate synthase (Halalkalibacterium halodurans (strain ATCC BAA-125 / DSM 18197 / FERM 7344 / JCM 9153 / C-125) (Bacillus halodurans)).